A 430-amino-acid polypeptide reads, in one-letter code: uncharacterized protein (430 aa).

The protein resides in the cytoplasm. It is found in the nucleus. This is an uncharacterized protein from Schizosaccharomyces pombe (strain 972 / ATCC 24843) (Fission yeast).